The primary structure comprises 204 residues: N-(5'-phosphoribosyl)anthranilate isomerase (204 aa).

Belongs to the TrpF family.

It carries out the reaction N-(5-phospho-beta-D-ribosyl)anthranilate = 1-(2-carboxyphenylamino)-1-deoxy-D-ribulose 5-phosphate. The protein operates within amino-acid biosynthesis; L-tryptophan biosynthesis; L-tryptophan from chorismate: step 3/5. The chain is N-(5'-phosphoribosyl)anthranilate isomerase from Bacillus cereus (strain Q1).